A 76-amino-acid chain; its full sequence is UPF0291 protein BCE_1981 (76 aa).

This sequence belongs to the UPF0291 family.

The protein localises to the cytoplasm. The polypeptide is UPF0291 protein BCE_1981 (Bacillus cereus (strain ATCC 10987 / NRS 248)).